Consider the following 711-residue polypeptide: Arginine decarboxylase 2 (711 aa).

The residue at position 147 (K147) is an N6-(pyridoxal phosphate)lysine. Substrate is bound at residue I331–Y341. The segment at M642–F661 is disordered. Acidic residues predominate over residues G650–F661.

The protein belongs to the Orn/Lys/Arg decarboxylase class-II family. SpeA subfamily. Homodimer and heterodimer with ADC1. It depends on pyridoxal 5'-phosphate as a cofactor. The cofactor is Mg(2+).

The protein resides in the plastid. It localises to the chloroplast. The protein localises to the cytoplasm. Its subcellular location is the cytosol. It catalyses the reaction L-arginine + H(+) = agmatine + CO2. Its pathway is amine and polyamine biosynthesis; agmatine biosynthesis; agmatine from L-arginine: step 1/1. In terms of biological role, required for the biosynthesis of putrescine. Catalyzes the first step of polyamine (PA) biosynthesis to produce putrescine from arginine. Is a major contributor to basal arginine decarboxylase (ADC) activity and putrescine biosynthesis. Accumulation of putrescine plays a positive role in salt stress tolerance. Accumulation of putrescine plays a positive role in freezing tolerance. Production of PA is essential for normal seed development. Controls PA homeostasis which is crucial for normal plant growth and development. In Arabidopsis thaliana (Mouse-ear cress), this protein is Arginine decarboxylase 2.